Here is a 276-residue protein sequence, read N- to C-terminus: Large ribosomal subunit protein uL2 (276 aa).

Residues 219–276 (TVRGSVMNPNDHPHGGGEGKQPIGRKQQMTPWGKKARGIKTRDKKKASTSMIVRRRNG) form a disordered region. Positions 252–276 (KKARGIKTRDKKKASTSMIVRRRNG) are enriched in basic residues.

This sequence belongs to the universal ribosomal protein uL2 family. Part of the 50S ribosomal subunit. Forms a bridge to the 30S subunit in the 70S ribosome.

Functionally, one of the primary rRNA binding proteins. Required for association of the 30S and 50S subunits to form the 70S ribosome, for tRNA binding and peptide bond formation. It has been suggested to have peptidyltransferase activity; this is somewhat controversial. Makes several contacts with the 16S rRNA in the 70S ribosome. In Acholeplasma laidlawii (strain PG-8A), this protein is Large ribosomal subunit protein uL2.